Reading from the N-terminus, the 180-residue chain is Anaerobic nitrite reductase GLB0 (180 aa).

The Globin domain occupies 23-172 (TYSKENEQLV…LAEQVKAEMH (150 aa)). The Homodimerization signature appears at 56–60 (EIAPG). Heme b contacts are provided by S66, K80, H84, K114, T118, and H119. Residues 126 to 138 (DDQFEIVKEAILY) carry the Homodimerization motif.

It belongs to the plant globin family. Homodimer. It depends on heme b as a cofactor.

Its subcellular location is the cytoplasm. The protein localises to the nucleus. It catalyses the reaction Fe(III)-heme b-[protein] + nitric oxide + H2O = Fe(II)-heme b-[protein] + nitrite + 2 H(+). Functionally, phytoglobin that reduces nitrite to nitric oxide (NO) under anoxic conditions (e.g. during flooding or in waterlogged soil). May not function as an oxygen storage or transport protein. Has an unusually high affinity for O(2) through an hexacoordinate heme iron because of a very low dissociation constant. The chain is Anaerobic nitrite reductase GLB0 from Physcomitrium patens (Spreading-leaved earth moss).